The primary structure comprises 88 residues: Large ribosomal subunit protein bL27 (88 aa).

A disordered region spans residues 1–21; it reads MAHKKGTGSTRNGRDSRAQRL.

The protein belongs to the bacterial ribosomal protein bL27 family.

This is Large ribosomal subunit protein bL27 from Picosynechococcus sp. (strain ATCC 27264 / PCC 7002 / PR-6) (Agmenellum quadruplicatum).